A 66-amino-acid polypeptide reads, in one-letter code: Large ribosomal subunit protein bL31 (66 aa).

Positions 16, 18, 36, and 39 each coordinate Zn(2+).

Belongs to the bacterial ribosomal protein bL31 family. Type A subfamily. As to quaternary structure, part of the 50S ribosomal subunit. Requires Zn(2+) as cofactor.

In terms of biological role, binds the 23S rRNA. The protein is Large ribosomal subunit protein bL31 of Geobacillus thermodenitrificans (strain NG80-2).